The sequence spans 955 residues: Eukaryotic translation initiation factor 3 subunit C (955 aa).

Disordered stretches follow at residues 1 to 22 and 157 to 299; these read MSRFFAGGSDSDSDSSSDSEPV and RAAP…EEGW. Residues 162 to 183 show a composition bias toward acidic residues; sequence DFAEEEEDDEREDEKGSDEEEE. Residues 206–218 show a composition bias toward low complexity; the sequence is VKPVADSDSSDWG. The segment covering 219–229 has biased composition (acidic residues); that stretch reads SDSDSDSTSSD. Over residues 230 to 250 the composition is skewed to basic and acidic residues; the sequence is EDAKYTSIRDRFLKKPEKGTE. A compositionally biased stretch (acidic residues) spans 288–297; the sequence is MFDENEEEEE. In terms of domain architecture, PCI spans 658–834; the sequence is FHMHINLELL…ETIVMHRSEP (177 aa). The tract at residues 865-955 is disordered; sequence NFFQRGGNQG…RNVEYQNKAE (91 aa). Over residues 882-894 the composition is skewed to low complexity; sequence YRNQNQNQNWNNN. Over residues 911 to 955 the composition is skewed to basic and acidic residues; the sequence is GEGREQREHHRDHHRDQREHREHQNREFREQREQMRNVEYQNKAE.

It belongs to the eIF-3 subunit C family. As to quaternary structure, component of the eukaryotic translation initiation factor 3 (eIF-3) complex.

The protein resides in the cytoplasm. Component of the eukaryotic translation initiation factor 3 (eIF-3) complex, which is involved in protein synthesis of a specialized repertoire of mRNAs and, together with other initiation factors, stimulates binding of mRNA and methionyl-tRNAi to the 40S ribosome. The eIF-3 complex specifically targets and initiates translation of a subset of mRNAs involved in cell proliferation. This chain is Eukaryotic translation initiation factor 3 subunit C, found in Anopheles gambiae (African malaria mosquito).